Here is a 106-residue protein sequence, read N- to C-terminus: UPF0145 protein Tlet_1264 (106 aa).

Belongs to the UPF0145 family.

The chain is UPF0145 protein Tlet_1264 from Pseudothermotoga lettingae (strain ATCC BAA-301 / DSM 14385 / NBRC 107922 / TMO) (Thermotoga lettingae).